The sequence spans 267 residues: UPF0328 protein ECU06_0070 (267 aa).

This sequence belongs to the UPF0328 family.

The polypeptide is UPF0328 protein ECU06_0070 (Encephalitozoon cuniculi (strain GB-M1) (Microsporidian parasite)).